A 372-amino-acid chain; its full sequence is Alpha-L-fucosidase 3 (372 aa).

An N-terminal signal peptide occupies residues 1-23; that stretch reads MNPILSSLFALSLLSSLSPSTHA. Residue Ser37 is the Nucleophile of the active site. N-linked (GlcNAc...) asparagine glycosylation is found at Asn96, Asn114, Asn139, and Asn182. Catalysis depends on residues Asp345 and His348.

Belongs to the 'GDSL' lipolytic enzyme family. In terms of tissue distribution, high expression in younger leaves and in the apical region of the inflorescence stem.

The protein resides in the secreted. Its subcellular location is the extracellular space. It is found in the apoplast. The enzyme catalyses an alpha-L-fucoside + H2O = L-fucose + an alcohol. Its function is as follows. Hydrolyzes alpha-1,2-linked fucose. Also active on fucosylated xyloglucan oligosaccharides. The sequence is that of Alpha-L-fucosidase 3 (FXG1) from Arabidopsis thaliana (Mouse-ear cress).